The primary structure comprises 144 residues: Endoribonuclease YbeY (144 aa).

3 residues coordinate Zn(2+): H104, H108, and H114.

This sequence belongs to the endoribonuclease YbeY family. Zn(2+) serves as cofactor.

Its subcellular location is the cytoplasm. In terms of biological role, single strand-specific metallo-endoribonuclease involved in late-stage 70S ribosome quality control and in maturation of the 3' terminus of the 16S rRNA. In Nitratiruptor sp. (strain SB155-2), this protein is Endoribonuclease YbeY.